The sequence spans 4328 residues: Cadherin-4 (4328 aa).

An N-terminal signal peptide occupies residues 1-23 (MKKHRVFHLFLLIFCKAISLVTT). At 24–4072 (SSSTEQIFEF…TVLEFLLKAE (4049 aa)) the chain is on the extracellular side. Residues Asn39 and Asn56 are each glycosylated (N-linked (GlcNAc...) asparagine). 2 consecutive Cadherin domains span residues 108 to 153 (PLNR…SPVF) and 156 to 275 (GEQG…NPNI). Residues Asn196, Asn330, Asn339, Asn365, Asn431, Asn452, and Asn584 are each glycosylated (N-linked (GlcNAc...) asparagine). Cadherin domains follow at residues 384 to 492 (DNEK…APVF), 507 to 608 (PGDV…SPVF), 609 to 720 (SSFP…SPQF), 721 to 826 (DEVS…PPKC), 827 to 934 (VVQH…AIEF), 935 to 1051 (DDVA…KPMY), 1047 to 1156 (KKPM…SPTF), 1175 to 1262 (RIFA…PPEI), 1265 to 1363 (KKSD…RPKF), 1364 to 1467 (SASH…SPYF), and 1476 to 1570 (VDES…APET). Asn811 and Asn899 each carry an N-linked (GlcNAc...) asparagine glycan. A Cell attachment site motif is present at residues 1090-1092 (RGD). A glycan (N-linked (GlcNAc...) asparagine) is linked at Asn1192. The tract at residues 1246-1267 (NSAGQKPRKSKNSPPEISGKKS) is disordered. N-linked (GlcNAc...) asparagine glycosylation is present at Asn1335. Asn1610 carries an N-linked (GlcNAc...) asparagine glycan. The 114-residue stretch at 1671 to 1784 (RRQVYRGTIR…IDENDEPPRF (114 aa)) folds into the Cadherin 14 domain. An N-linked (GlcNAc...) asparagine glycan is attached at Asn1895. Residues 1917-1984 (FSIVNPHEAF…ENINDETPIF (68 aa)) enclose the Cadherin 15 domain. 7 N-linked (GlcNAc...) asparagine glycosylation sites follow: Asn2059, Asn2150, Asn2216, Asn2367, Asn2413, Asn2440, and Asn2535. Cadherin domains are found at residues 2187–2285 (EKLK…MPEF) and 2286–2397 (IRSD…PPRF). Cadherin domains are found at residues 2429-2505 (LQFS…PPFF), 2506-2608 (VLPF…VPRF), 2609-2712 (SNSH…APAF), 2719-2813 (FTIS…PPQF), 2828-2915 (SPIL…CPEA), 2913-3011 (PEAN…RPKI), 3012-3113 (IEKL…APTF), 3114-3216 (EKST…APKF), and 3217-3326 (EKEK…APTF). Residues Asn2844, Asn2916, Asn2941, Asn3083, and Asn3143 are each glycosylated (N-linked (GlcNAc...) asparagine). Asn3330 carries N-linked (GlcNAc...) asparagine glycosylation. Cadherin domains follow at residues 3335–3428 (VQEG…APTM) and 3429–3554 (KPMK…VDEF). Asn3512 is a glycosylation site (N-linked (GlcNAc...) asparagine). An EGF-like 1 domain is found at 3706–3744 (ETNQCAKSPCEQWQLCIPSVHNSTYECVCPLGMEGDKCS). Cystine bridges form between Cys3710–Cys3721, Cys3715–Cys3732, Cys3734–Cys3743, Cys3898–Cys3925, Cys3933–Cys3944, Cys3938–Cys3954, Cys3956–Cys3965, Cys3972–Cys3983, Cys3977–Cys3992, and Cys3994–Cys4003. Residue Asn3727 is glycosylated (N-linked (GlcNAc...) asparagine). Residues 3757–3925 (EAELSVGGDG…MKLFGAQPGC (169 aa)) form the Laminin G-like domain. EGF-like domains are found at residues 3929–3966 (TSSPCNDLPCQHAGTCISQGKSHFKCECPSRYSGNVCE) and 3968–4004 (DLEPCASSPCPTGIQCIPFYNDYLCKCPNGFTGKHCE). An N-linked (GlcNAc...) asparagine glycan is attached at Asn4043. Residues 4073-4093 (IVIVILGVLLLLLVFCLTFIT) traverse the membrane as a helical segment. At 4094-4328 (WKCCKKNRDP…IDEEVNIHIS (235 aa)) the chain is on the cytoplasmic side. Disordered regions lie at residues 4143 to 4215 (TSSV…SSLR) and 4268 to 4311 (NFER…PISL). Residues 4178 to 4196 (TRRDPLPSDKFRRVDETAN) are compositionally biased toward basic and acidic residues. The Cell attachment site signature appears at 4207 to 4209 (RGD).

In terms of tissue distribution, in larvae and adult, it is expressed in various tissues including pharyngeal muscle, hypodermis and gonad. In the nervous system it is expressed in sensory neurons and motor neurons in the ventral cord.

It is found in the cell membrane. Its function is as follows. Potential calcium-dependent cell-adhesion protein that controls axon guidance in the ventral cord. This chain is Cadherin-4, found in Caenorhabditis elegans.